Reading from the N-terminus, the 336-residue chain is MDRIVEIEKFSPDETYETSLRPSNFDGYIGQENIKKNLEIFIKAAKKRNECLDHILFSGPAGLGKTTLANIISYEMNANIKTTAAPMIEKSGDLAAILTNLSEGDILFIDEIHRLSPAIEEVLYPAMEDFRLDIIIGSGPAAQTIKIDLPKFTLIGATTRAGMLSNPLRDRFGMQFRLEFYKNEELAIILEKAALKLNKTCEKNAALEIAKRSRSTPRIALRLLKRVRDFADVNDEEIISEKRAKEALDSLGVNELGFDAMDLRYLELLTEAKRKPIGLSSIAAALSEDENTIEDVIEPYLLANGYIERTAKGRIASLKSFDVLKLKYNKGLFDEK.

The large ATPase domain (RuvB-L) stretch occupies residues 1-181 (MDRIVEIEKF…FGMQFRLEFY (181 aa)). ATP is bound by residues Leu-20, Arg-21, Gly-62, Lys-65, Thr-66, Thr-67, 128–130 (EDF), Arg-171, Tyr-181, and Arg-218. Thr-66 is a binding site for Mg(2+). A small ATPAse domain (RuvB-S) region spans residues 182–252 (KNEELAIILE…RAKEALDSLG (71 aa)). The interval 255 to 336 (ELGFDAMDLR…KYNKGLFDEK (82 aa)) is head domain (RuvB-H). Positions 309 and 314 each coordinate DNA.

The protein belongs to the RuvB family. Homohexamer. Forms an RuvA(8)-RuvB(12)-Holliday junction (HJ) complex. HJ DNA is sandwiched between 2 RuvA tetramers; dsDNA enters through RuvA and exits via RuvB. An RuvB hexamer assembles on each DNA strand where it exits the tetramer. Each RuvB hexamer is contacted by two RuvA subunits (via domain III) on 2 adjacent RuvB subunits; this complex drives branch migration. In the full resolvosome a probable DNA-RuvA(4)-RuvB(12)-RuvC(2) complex forms which resolves the HJ.

It localises to the cytoplasm. The catalysed reaction is ATP + H2O = ADP + phosphate + H(+). The RuvA-RuvB-RuvC complex processes Holliday junction (HJ) DNA during genetic recombination and DNA repair, while the RuvA-RuvB complex plays an important role in the rescue of blocked DNA replication forks via replication fork reversal (RFR). RuvA specifically binds to HJ cruciform DNA, conferring on it an open structure. The RuvB hexamer acts as an ATP-dependent pump, pulling dsDNA into and through the RuvAB complex. RuvB forms 2 homohexamers on either side of HJ DNA bound by 1 or 2 RuvA tetramers; 4 subunits per hexamer contact DNA at a time. Coordinated motions by a converter formed by DNA-disengaged RuvB subunits stimulates ATP hydrolysis and nucleotide exchange. Immobilization of the converter enables RuvB to convert the ATP-contained energy into a lever motion, pulling 2 nucleotides of DNA out of the RuvA tetramer per ATP hydrolyzed, thus driving DNA branch migration. The RuvB motors rotate together with the DNA substrate, which together with the progressing nucleotide cycle form the mechanistic basis for DNA recombination by continuous HJ branch migration. Branch migration allows RuvC to scan DNA until it finds its consensus sequence, where it cleaves and resolves cruciform DNA. The protein is Holliday junction branch migration complex subunit RuvB of Campylobacter lari (strain RM2100 / D67 / ATCC BAA-1060).